Consider the following 227-residue polypeptide: Lipoprotein-releasing system ATP-binding protein LolD (227 aa).

An ABC transporter domain is found at 5–227 (LICQNITKHY…QDGILRESNS (223 aa)). Position 41–48 (41–48 (GSSGSGKS)) interacts with ATP.

This sequence belongs to the ABC transporter superfamily. Lipoprotein translocase (TC 3.A.1.125) family. As to quaternary structure, the complex is composed of two ATP-binding proteins (LolD) and two transmembrane proteins (LolC and LolE).

Its subcellular location is the cell inner membrane. Part of the ABC transporter complex LolCDE involved in the translocation of mature outer membrane-directed lipoproteins, from the inner membrane to the periplasmic chaperone, LolA. Responsible for the formation of the LolA-lipoprotein complex in an ATP-dependent manner. The sequence is that of Lipoprotein-releasing system ATP-binding protein LolD from Histophilus somni (strain 129Pt) (Haemophilus somnus).